Consider the following 683-residue polypeptide: Cysteine-rich receptor-like protein kinase 28 (683 aa).

Residues 1–24 (MEHVRVIFFFFACVLKIVPFICLA) form the signal peptide. Residues 25–288 (QKDKYEFPPG…RTGKGKGGSK (264 aa)) lie on the Extracellular side of the membrane. Gnk2-homologous domains follow at residues 32–136 (PPGF…NMII) and 142–251 (TTPT…TWRF). N43, N47, N73, and N153 each carry an N-linked (GlcNAc...) asparagine glycan. The segment at 263 to 283 (PAIQPADSPTSAARTERTGKG) is disordered. The chain crosses the membrane as a helical span at residues 289 to 309 (VIVAIVIPIVFVALFAICLCL). Over 310–683 (LLKWKKNKSV…DVTVSELSPR (374 aa)) the chain is Cytoplasmic. Residues 361-641 (FSPENELGRG…ALMLNSYSYT (281 aa)) enclose the Protein kinase domain. Residues 367-375 (LGRGGFGSV) and K389 each bind ATP. Y434 carries the post-translational modification Phosphotyrosine. D486 acts as the Proton acceptor in catalysis. S490 carries the post-translational modification Phosphoserine. A Phosphothreonine modification is found at T528. Y536 is modified (phosphotyrosine).

This sequence belongs to the protein kinase superfamily. Ser/Thr protein kinase family. CRK subfamily.

Its subcellular location is the membrane. The catalysed reaction is L-seryl-[protein] + ATP = O-phospho-L-seryl-[protein] + ADP + H(+). It catalyses the reaction L-threonyl-[protein] + ATP = O-phospho-L-threonyl-[protein] + ADP + H(+). The protein is Cysteine-rich receptor-like protein kinase 28 (CRK28) of Arabidopsis thaliana (Mouse-ear cress).